Consider the following 191-residue polypeptide: uncharacterized protein (191 aa).

Disordered regions lie at residues 1 to 42 (MSEE…DADA) and 145 to 191 (QNQE…IDLD). 2 stretches are compositionally biased toward basic and acidic residues: residues 11–26 (PRPD…RATG) and 147–178 (QERR…RDEG).

In terms of assembly, it may form a heterotetramer of two glucokinase subunits (glk) with two ORF2 proteins.

Its function is as follows. May be involved in glucose transport or metabolism. This is an uncharacterized protein from Streptomyces coelicolor (strain ATCC BAA-471 / A3(2) / M145).